The chain runs to 336 residues: Mitochondrial fission regulator 2 (336 aa).

Residues 139–166 (QPDALLKISALEEELQRLRAQIATIITA) adopt a coiled-coil conformation. The disordered stretch occupies residues 296-336 (HRQRDDSFGKENHSAEPSPFSSPDTPRIFQHTRRSQGRIHL). A compositionally biased stretch (basic and acidic residues) spans 297-309 (RQRDDSFGKENHS). Basic residues predominate over residues 325–336 (QHTRRSQGRIHL).

It belongs to the MTFR1 family.

The protein resides in the mitochondrion. Functionally, may play a role in mitochondrial aerobic respiration. Can also promote mitochondrial fission. This is Mitochondrial fission regulator 2 (mtfr2) from Danio rerio (Zebrafish).